The following is a 330-amino-acid chain: G-protein coupled receptor 157 (330 aa).

The Extracellular portion of the chain corresponds to 1 to 15; sequence MPSPAPPTELLPWER. The helical transmembrane segment at 16-36 threads the bilayer; that stretch reads AVVLLSCALSALGSGLLVATH. The Cytoplasmic portion of the chain corresponds to 37–48; it reads ALWPDLRSRARR. A helical membrane pass occupies residues 49–69; that stretch reads LLLFLSLADLLSAASYFYGVL. At 70 to 87 the chain is on the extracellular side; sequence QDFAGTSWDCVLQGALST. The chain crosses the membrane as a helical span at residues 88 to 108; sequence FANTSSFFWTVAIALYLYLSI. Topologically, residues 109 to 119 are cytoplasmic; the sequence is VRTTRGPSTDH. A helical transmembrane segment spans residues 120–140; that stretch reads LIWAFHLISWGVPLAITVAAV. Residues 141–166 are Extracellular-facing; that stretch reads SLKKIGYDASDVSVGWCWINLEAEDR. The helical transmembrane segment at 167 to 187 threads the bilayer; sequence VLWMLLTGKLWEMLAYILLPL. Over 188 to 227 the chain is Cytoplasmic; that stretch reads LYLLVRKHINRAHQALSEYRPICEGRQLQRGSSTSTADKK. Residues 228–248 traverse the membrane as a helical segment; that stretch reads LVLIPLIFICLRVWSTVRFVL. Topologically, residues 249–259 are extracellular; the sequence is TLCGSPAVQTP. Residues 260–280 traverse the membrane as a helical segment; that stretch reads VLVVLHGIGNTFQGGANCIMF. Residues 281 to 330 lie on the Cytoplasmic side of the membrane; that stretch reads VLCTRAVRTRLFSLCCCCPRPSTQSPPGAPTPPKIGESQESRRTPEVPST. The segment at 301 to 330 is disordered; it reads PSTQSPPGAPTPPKIGESQESRRTPEVPST. The span at 317 to 330 shows a compositional bias: basic and acidic residues; the sequence is ESQESRRTPEVPST.

This sequence belongs to the G-protein coupled receptor 2 family. As to expression, expressed in the primary cilia of radial glial progenitors (RGPs) in the developing neocortex.

The protein localises to the cell projection. Its subcellular location is the cilium membrane. In terms of biological role, orphan receptor that promotes neuronal differentiation of radial glial progenitors (RGPs). The activity of this receptor is mediated by a G(q)-protein that activates a phosphatidylinositol-calcium second messenger. This Mus musculus (Mouse) protein is G-protein coupled receptor 157 (Gpr157).